Reading from the N-terminus, the 151-residue chain is Protein-export protein SecB (151 aa).

The protein belongs to the SecB family. In terms of assembly, homotetramer, a dimer of dimers. One homotetramer interacts with 1 SecA dimer.

It localises to the cytoplasm. One of the proteins required for the normal export of preproteins out of the cell cytoplasm. It is a molecular chaperone that binds to a subset of precursor proteins, maintaining them in a translocation-competent state. It also specifically binds to its receptor SecA. In Acinetobacter baylyi (strain ATCC 33305 / BD413 / ADP1), this protein is Protein-export protein SecB.